The chain runs to 148 residues: NTR domain-containing protein (148 aa).

The signal sequence occupies residues 1 to 26; it reads MVCRFSYVQVVLILVVLSVIISWANA. Disulfide bonds link C27-C96, C29-C122, and C40-C146. One can recognise an NTR domain in the interval 27 to 146; sequence CSCFPPDETR…LQLFNDPQWC (120 aa).

In terms of tissue distribution, prismatic layer of shell (at protein level). Expressed primarily in the mantle with highest level in the mantle edge and lower level in the mantle pallium.

The protein resides in the secreted. The chain is NTR domain-containing protein from Margaritifera margaritifera (Freshwater pearl mussel).